Here is a 133-residue protein sequence, read N- to C-terminus: Ribosome-binding factor A (133 aa).

Belongs to the RbfA family. In terms of assembly, monomer. Binds 30S ribosomal subunits, but not 50S ribosomal subunits or 70S ribosomes.

It is found in the cytoplasm. In terms of biological role, one of several proteins that assist in the late maturation steps of the functional core of the 30S ribosomal subunit. Associates with free 30S ribosomal subunits (but not with 30S subunits that are part of 70S ribosomes or polysomes). Required for efficient processing of 16S rRNA. May interact with the 5'-terminal helix region of 16S rRNA. This Acinetobacter baumannii (strain ACICU) protein is Ribosome-binding factor A.